A 371-amino-acid polypeptide reads, in one-letter code: Heterodimeric geranylgeranyl pyrophosphate synthase large subunit 1, chloroplastic (371 aa).

A chloroplast-targeting transit peptide spans Met1–Ser51. At Ser52 the chain carries N-acetylserine. Isopentenyl diphosphate is bound by residues Lys116, Arg119, and His148. Mg(2+)-binding residues include Asp155 and Asp161. Arg166 provides a ligand contact to dimethylallyl diphosphate. An isopentenyl diphosphate-binding site is contributed by Arg167. Dimethylallyl diphosphate is bound by residues Lys256, Thr257, Gln294, Lys311, and Lys321.

This sequence belongs to the FPP/GGPP synthase family. Forms homodimers. Part of a heterodimeric geranyl(geranyl)diphosphate synthase. Interacts with GGR. Requires Mg(2+) as cofactor. As to expression, expressed ubiquitously.

It localises to the plastid. The protein resides in the chloroplast. The protein localises to the cytoplasm. The enzyme catalyses isopentenyl diphosphate + dimethylallyl diphosphate = (2E)-geranyl diphosphate + diphosphate. It carries out the reaction isopentenyl diphosphate + (2E)-geranyl diphosphate = (2E,6E)-farnesyl diphosphate + diphosphate. It catalyses the reaction isopentenyl diphosphate + (2E,6E)-farnesyl diphosphate = (2E,6E,10E)-geranylgeranyl diphosphate + diphosphate. Its pathway is isoprenoid biosynthesis; farnesyl diphosphate biosynthesis; farnesyl diphosphate from geranyl diphosphate and isopentenyl diphosphate: step 1/1. It functions in the pathway isoprenoid biosynthesis; geranyl diphosphate biosynthesis; geranyl diphosphate from dimethylallyl diphosphate and isopentenyl diphosphate: step 1/1. The protein operates within isoprenoid biosynthesis; geranylgeranyl diphosphate biosynthesis; geranylgeranyl diphosphate from farnesyl diphosphate and isopentenyl diphosphate: step 1/1. Heterodimeric geranyl(geranyl)-diphosphate (GPP) synthase large subunit. In vitro, the large subunit catalyzes mainly the trans-addition of the three molecules of IPP onto DMAPP to form geranylgeranyl pyrophosphate while the small subunit alone is inactive. Upon association of the two subunits, the product profile changes and the production of gerany-diphosphate is strongly increased. In Arabidopsis thaliana (Mouse-ear cress), this protein is Heterodimeric geranylgeranyl pyrophosphate synthase large subunit 1, chloroplastic (GGPPS1).